Here is a 109-residue protein sequence, read N- to C-terminus: Protein FAM32A-like (109 aa).

Positions 1–48 are disordered; it reads MSEYKSVQKGSLKLKGVSLPSKKKKKKNKEMKRLEEQVLTSENEEGTK. The span at 9–20 shows a compositional bias: low complexity; it reads KGSLKLKGVSLP. The segment covering 21-30 has biased composition (basic residues); that stretch reads SKKKKKKNKE.

The protein belongs to the FAM32 family.

The protein resides in the nucleus. Its function is as follows. May induce G2 arrest and apoptosis. May also increase cell sensitivity to apoptotic stimuli. The polypeptide is Protein FAM32A-like (fam32al) (Danio rerio (Zebrafish)).